A 388-amino-acid polypeptide reads, in one-letter code: LIM/homeobox protein Lhx9 (388 aa).

2 consecutive LIM zinc-binding domains span residues 69 to 130 (ISDR…CHLG) and 131 to 193 (ISAS…LSYT). Disordered stretches follow at residues 239 to 263 (ENEADHLDRDQQPYPPSQKTKRMRT), 321 to 356 (ENGGVDKADGTSLPAPPSADSGALTPPGTATTLTDL), and 369 to 388 (SNMDSHESGSPSQTTLTNLF). The homeobox DNA-binding region spans 267–326 (HHQLRTMKSYFAINHNPDAKDLKQLAQKTGLTKRVLQVWFQNARAKFRRNLLRQENGGVD). Low complexity predominate over residues 344-356 (LTPPGTATTLTDL). Polar residues predominate over residues 376 to 388 (SGSPSQTTLTNLF).

Interacts with LDB1 and LDB2.

It is found in the nucleus. Its function is as follows. Involved in gonadal development. This chain is LIM/homeobox protein Lhx9 (Lhx9), found in Rattus norvegicus (Rat).